The following is a 284-amino-acid chain: uncharacterized protein (284 aa).

Positions 1 to 20 (MLHNIQSILQFLLFVSSVQA) are cleaved as a signal peptide. In terms of domain architecture, Apple spans 38–121 (CFEFKKNYWI…FTVNFFRNIC (84 aa)). Disulfide bonds link Cys38–Cys121, Cys63–Cys89, and Cys67–Cys77. An N-linked (GlcNAc...) asparagine glycan is attached at Asn256. Residues 264–284 (SSTGLKFTTGLLIILVVFLFL) traverse the membrane as a helical segment.

The protein localises to the membrane. This is an uncharacterized protein from Caenorhabditis elegans.